We begin with the raw amino-acid sequence, 519 residues long: DNA-directed RNA polymerase subunit Rpo2N (519 aa).

Belongs to the RNA polymerase beta chain family. In terms of assembly, part of the RNA polymerase complex.

The protein localises to the cytoplasm. It catalyses the reaction RNA(n) + a ribonucleoside 5'-triphosphate = RNA(n+1) + diphosphate. In terms of biological role, DNA-dependent RNA polymerase (RNAP) catalyzes the transcription of DNA into RNA using the four ribonucleoside triphosphates as substrates. The Rpo2 subunit (Rpo2N and Rpo2C in this organism) is implicated in DNA promoter recognition and in nucleotide binding. In Methanothermobacter thermautotrophicus (strain ATCC 29096 / DSM 1053 / JCM 10044 / NBRC 100330 / Delta H) (Methanobacterium thermoautotrophicum), this protein is DNA-directed RNA polymerase subunit Rpo2N.